The chain runs to 248 residues: Transcription termination/antitermination protein NusG (248 aa).

The KOW domain maps to 197–227; the sequence is KGDQVRVIEGPFMNFTGTVEEVHPEKRKLTV.

Belongs to the NusG family. In terms of assembly, monomer. Homodimer.

Its function is as follows. Participates in transcription elongation, termination and antitermination. The chain is Transcription termination/antitermination protein NusG from Aquifex aeolicus (strain VF5).